The sequence spans 186 residues: MAVARAGVLGVQWLQRASRNVMPLGARTASHMTKDMFPGPYPRTPEERAAAAKKYNMRVEDYEPYPDDGMGYGDYPKLPDRSQHERDPWYSWDQPGLRLNWGEPMHWHLDMYNRNRVDTSPTPVSWHVMCMQLFGFLAFMIFMCWVGDVYPVYQPVGPKQYPYNNLYLERGGDPSKEPERVVHYEI.

The transit peptide at 1–28 directs the protein to the mitochondrion; sequence MAVARAGVLGVQWLQRASRNVMPLGART. Residues 133-153 form a helical membrane-spanning segment; it reads LFGFLAFMIFMCWVGDVYPVY.

The protein belongs to the complex I NDUFB8 subunit family. Complex I is composed of 45 different subunits.

The protein resides in the mitochondrion inner membrane. Its function is as follows. Accessory subunit of the mitochondrial membrane respiratory chain NADH dehydrogenase (Complex I), that is believed not to be involved in catalysis. Complex I functions in the transfer of electrons from NADH to the respiratory chain. The immediate electron acceptor for the enzyme is believed to be ubiquinone. The sequence is that of NADH dehydrogenase [ubiquinone] 1 beta subcomplex subunit 8, mitochondrial (NDUFB8) from Homo sapiens (Human).